A 314-amino-acid polypeptide reads, in one-letter code: tRNA dimethylallyltransferase (314 aa).

14 to 21 lines the ATP pocket; it reads GPTASGKT. Position 16–21 (16–21) interacts with substrate; sequence TASGKT. Interaction with substrate tRNA regions lie at residues 39-42, 163-167, and 245-250; these read DSAQ, QRLQR, and RCVGYR.

The protein belongs to the IPP transferase family. As to quaternary structure, monomer. Mg(2+) is required as a cofactor.

The enzyme catalyses adenosine(37) in tRNA + dimethylallyl diphosphate = N(6)-dimethylallyladenosine(37) in tRNA + diphosphate. Catalyzes the transfer of a dimethylallyl group onto the adenine at position 37 in tRNAs that read codons beginning with uridine, leading to the formation of N6-(dimethylallyl)adenosine (i(6)A). The protein is tRNA dimethylallyltransferase of Dechloromonas aromatica (strain RCB).